The sequence spans 159 residues: ATP synthase subunit b (159 aa).

Residues 4–24 (VGINGTLIVQLVTFVILVALL) form a helical membrane-spanning segment.

Belongs to the ATPase B chain family. In terms of assembly, F-type ATPases have 2 components, F(1) - the catalytic core - and F(0) - the membrane proton channel. F(1) has five subunits: alpha(3), beta(3), gamma(1), delta(1), epsilon(1). F(0) has three main subunits: a(1), b(2) and c(10-14). The alpha and beta chains form an alternating ring which encloses part of the gamma chain. F(1) is attached to F(0) by a central stalk formed by the gamma and epsilon chains, while a peripheral stalk is formed by the delta and b chains.

Its subcellular location is the cell inner membrane. F(1)F(0) ATP synthase produces ATP from ADP in the presence of a proton or sodium gradient. F-type ATPases consist of two structural domains, F(1) containing the extramembraneous catalytic core and F(0) containing the membrane proton channel, linked together by a central stalk and a peripheral stalk. During catalysis, ATP synthesis in the catalytic domain of F(1) is coupled via a rotary mechanism of the central stalk subunits to proton translocation. Its function is as follows. Component of the F(0) channel, it forms part of the peripheral stalk, linking F(1) to F(0). This Acidithiobacillus ferridurans protein is ATP synthase subunit b.